A 122-amino-acid polypeptide reads, in one-letter code: Large ribosomal subunit protein uL14 (122 aa).

Belongs to the universal ribosomal protein uL14 family. As to quaternary structure, part of the 50S ribosomal subunit. Forms a cluster with proteins L3 and L19. In the 70S ribosome, L14 and L19 interact and together make contacts with the 16S rRNA in bridges B5 and B8.

In terms of biological role, binds to 23S rRNA. Forms part of two intersubunit bridges in the 70S ribosome. In Cytophaga hutchinsonii (strain ATCC 33406 / DSM 1761 / CIP 103989 / NBRC 15051 / NCIMB 9469 / D465), this protein is Large ribosomal subunit protein uL14.